The following is a 513-amino-acid chain: MHLSSLSLSLTALAIVSPSAAYPHLGSSQPVLHTNSDTTQSRADAIKAAFSHAWDGYLQYAFPHDELHPVSNGYGDSRNGWGASAVDALSTAVIMRNATIVNQILDHVAKIDYSKTNTTVSLFETTIRYLGGMLSGYDLLKGPVSDLVQDSSKIDVLLTQSKNLGDVLKFAFDTPSGVPYNNLNITSGGNDGAKTNGLAVTGTLALEWTRLSDLTGDTTYADLSQKAESYLLNPQPKSAEPFPGLVGSNINISNGQFTDAQVSWNGGDDSYYEYLIKMYVYDPKRFGLYKDRWVAAAQSTMQHLASHPSTRPDLTFLASYNNGTLGLSSQHLTCFDGGSFLLGGTVLNRTDFINFGLDLVSGCHDTYNSTLTGIGPESFSWDTSDIPSSQQSLYEKAGFYITSGAYILRPEVIESFYYAWRATGQETYREWIWSAFSAVNDYCRTDSGFSGLTDVNAANGGSRYDNQESFLFAEVMKYSYMAFAEDAAWQVQPGSGNQFVFNTEAHPVRVSST.

The signal sequence occupies residues 1 to 21 (MHLSSLSLSLTALAIVSPSAA). Residues asparagine 97, asparagine 117, asparagine 184, asparagine 251, asparagine 322, asparagine 348, and asparagine 368 are each glycosylated (N-linked (GlcNAc...) asparagine). Cysteine 334 and cysteine 363 form a disulfide bridge. The Proton donor role is filled by glutamate 377. Threonine 503 provides a ligand contact to Ca(2+).

Belongs to the glycosyl hydrolase 47 family. In terms of assembly, monomer. The cofactor is Ca(2+). Mg(2+) serves as cofactor.

It localises to the cytoplasmic vesicle lumen. The enzyme catalyses N(4)-(alpha-D-Man-(1-&gt;2)-alpha-D-Man-(1-&gt;2)-alpha-D-Man-(1-&gt;3)-[alpha-D-Man-(1-&gt;2)-alpha-D-Man-(1-&gt;3)-[alpha-D-Man-(1-&gt;2)-alpha-D-Man-(1-&gt;6)]-alpha-D-Man-(1-&gt;6)]-beta-D-Man-(1-&gt;4)-beta-D-GlcNAc-(1-&gt;4)-beta-D-GlcNAc)-L-asparaginyl-[protein] (N-glucan mannose isomer 9A1,2,3B1,2,3) + 4 H2O = N(4)-(alpha-D-Man-(1-&gt;3)-[alpha-D-Man-(1-&gt;3)-[alpha-D-Man-(1-&gt;6)]-alpha-D-Man-(1-&gt;6)]-beta-D-Man-(1-&gt;4)-beta-D-GlcNAc-(1-&gt;4)-beta-D-GlcNAc)-L-asparaginyl-[protein] (N-glucan mannose isomer 5A1,2) + 4 beta-D-mannose. It catalyses the reaction N(4)-(alpha-D-Man-(1-&gt;2)-alpha-D-Man-(1-&gt;2)-alpha-D-Man-(1-&gt;3)-[alpha-D-Man-(1-&gt;3)-[alpha-D-Man-(1-&gt;2)-alpha-D-Man-(1-&gt;6)]-alpha-D-Man-(1-&gt;6)]-beta-D-Man-(1-&gt;4)-beta-D-GlcNAc-(1-&gt;4)-beta-D-GlcNAc)-L-asparaginyl-[protein] (N-glucan mannose isomer 8A1,2,3B1,3) + 3 H2O = N(4)-(alpha-D-Man-(1-&gt;3)-[alpha-D-Man-(1-&gt;3)-[alpha-D-Man-(1-&gt;6)]-alpha-D-Man-(1-&gt;6)]-beta-D-Man-(1-&gt;4)-beta-D-GlcNAc-(1-&gt;4)-beta-D-GlcNAc)-L-asparaginyl-[protein] (N-glucan mannose isomer 5A1,2) + 3 beta-D-mannose. The protein operates within protein modification; protein glycosylation. Involved in the maturation of Asn-linked oligosaccharides. Progressively trims alpha-1,2-linked mannose residues from Man(9)GlcNAc(2) to produce Man(5)GlcNAc(2). The protein is Probable mannosyl-oligosaccharide alpha-1,2-mannosidase 1B (mns1B) of Aspergillus niger (strain ATCC MYA-4892 / CBS 513.88 / FGSC A1513).